A 428-amino-acid chain; its full sequence is Protein terminus (428 aa).

A C3H1-type zinc finger spans residues 325-346; that stretch reads CRRCRTQFSRRSKLHIHQKLRC.

This Drosophila melanogaster (Fruit fly) protein is Protein terminus (term).